The sequence spans 423 residues: Protein CLP1 homolog (423 aa).

Residues Glu-19, Lys-60, and 122–127 each bind ATP; that span reads DVGKTT.

The protein belongs to the Clp1 family. Clp1 subfamily.

The protein localises to the nucleus. Required for endonucleolytic cleavage during polyadenylation-dependent pre-mRNA 3'-end formation. This chain is Protein CLP1 homolog (cbc), found in Culex quinquefasciatus (Southern house mosquito).